The primary structure comprises 650 residues: MNTSILAILFLIQCVFTLGLHFHPLDPLTPQEINKTSFIVKKSHLGNLKDLTFHYLDLEEPNKSHVLQWLSPNPSKKPPPPRRRSFVVVRAGGQTYELIIDLTTSKIASSRIYTGHGFPSFTFIELFKASKLPLTYPPFKKSILDRSLNISEVSCIPFTVGWYGETTTRRELKASCFYRDGSVNVFTRPIEGITVTIDVDSMQVIKYSDRFRKPIPDKEGNDFRTKHRPFPFFCNVSDTGFKILGNRVKWANWKFHVGFTARAGVTISTASVLDPRTKRFRRVMYRGHVSETFVPYMDPTYEWYYRTFMDIGEFGFGRSAVNLQPLIDCPQNAAFLDGHVAGPDGTAQKMTNVMCVFEKNGYGASFRHTEINVPGQVITSGEAEISLVVRMVATLGNYDYIVDWEFKKNGAIRVGVDLTGVLEVKATSYTSNDQITENVYGTLVAKNTIAVNHDHYLTYYLDLDVDGNGNSLVKAKLKTVRVTEVNKTSSRRKSYWTVVKETAKTEADGRVRLGSDPVELLIVNPNKKTKIGNTVGYRLIPEHLQATSLLTDDDYPELRAGYTKYPVWVTAYDRSERWAGGFYSDRSRGDDGLAVWSSRNREIENKDIVMWYNVGFHHIPYQEDFPVMPTLHGGFTLRPSNFFDNDPLIG.

The N-terminal stretch at 1–19 (MNTSILAILFLIQCVFTLG) is a signal peptide. N-linked (GlcNAc...) asparagine glycosylation is found at Asn2, Asn34, Asn62, and Asn149. An intrachain disulfide couples Cys155 to Cys176. A glycan (N-linked (GlcNAc...) asparagine) is linked at Asn235. 308–319 (FMDIGEFGFGRS) contributes to the substrate binding site. Asp310 functions as the Proton acceptor in the catalytic mechanism. Cys329 and Cys355 are disulfide-bonded. Position 395–400 (395–400 (LGNYDY)) interacts with substrate. The active-site Schiff-base intermediate with substrate; via topaquinone is Tyr398. At Tyr398 the chain carries 2',4',5'-topaquinone. Cu cation is bound by residues His453 and His455. Positions 462 and 464 each coordinate Mn(2+). The N-linked (GlcNAc...) asparagine glycan is linked to Asn486. Asp607 and Ile608 together coordinate Mn(2+). Position 618 (His618) interacts with Cu cation.

It belongs to the copper/topaquinone oxidase family. As to quaternary structure, homodimer. L-topaquinone is required as a cofactor. Requires Cu cation as cofactor. Zn(2+) serves as cofactor. It depends on Mn(2+) as a cofactor. Post-translationally, topaquinone (TPQ) is generated by copper-dependent autoxidation of a specific tyrosyl residue. As to expression, expressed in the vascular tissues at the division/differentiation transition zone.

The protein localises to the secreted. The enzyme catalyses a primary methyl amine + O2 + H2O = an aldehyde + H2O2 + NH4(+). With respect to regulation, repressed by semi-carbazide, a specific and irreversible inhibitor of copper amine oxidases. Oxidizes preferentially the aliphatic diamine putrescine with production of the corresponding aldehyde, ammonia and hydrogen peroxide. May be involved in the regulation of developmental programmed cell death (PCD) in both vascular tissue and the root cap. Required for jasmonic acid-(MeJA) mediated early protoxylem differentiation associated with putrescine levels reduction and H(2)O(2) accumulation in roots. This is Primary amine oxidase 1 from Arabidopsis thaliana (Mouse-ear cress).